Here is a 220-residue protein sequence, read N- to C-terminus: 7-cyano-7-deazaguanine synthase (220 aa).

Position 10–20 (10–20 (FSGGQDSTTCL)) interacts with ATP. Cysteine 186, cysteine 195, cysteine 198, and cysteine 201 together coordinate Zn(2+).

It belongs to the QueC family. As to quaternary structure, homodimer. Requires Zn(2+) as cofactor.

It carries out the reaction 7-carboxy-7-deazaguanine + NH4(+) + ATP = 7-cyano-7-deazaguanine + ADP + phosphate + H2O + H(+). It participates in purine metabolism; 7-cyano-7-deazaguanine biosynthesis. Catalyzes the ATP-dependent conversion of 7-carboxy-7-deazaguanine (CDG) to 7-cyano-7-deazaguanine (preQ(0)). The sequence is that of 7-cyano-7-deazaguanine synthase from Bacillus cereus (strain G9842).